The chain runs to 1129 residues: Phospholipid-transporting ATPase 11C (1129 aa).

Over 1-83 (MFRRTLNRLC…IIFLVQVTVD (83 aa)) the chain is Cytoplasmic. Residues 84-104 (TPTSPVTSGLPLFFVITVTAI) form a helical membrane-spanning segment. The Extracellular portion of the chain corresponds to 105 to 287 (KQGYEDWLRH…SQKCSAVEKS (183 aa)). Residues 288–308 (INAFLIVYLFILLTKAAVCTT) form a helical membrane-spanning segment. The Cytoplasmic portion of the chain corresponds to 309 to 343 (LKYVWQSSPYNDEPWYNQKTQKERETFQVLKMFTD). Residues 344-364 (FLSFMVLFNFIIPVSMYVTVE) form a helical membrane-spanning segment. Residues 365–876 (MQKFLGSFFI…YVRIAHLVQY (512 aa)) are Extracellular-facing. Catalysis depends on aspartate 409, which acts as the 4-aspartylphosphate intermediate. Residues aspartate 409, lysine 410, and threonine 411 each contribute to the ATP site. A Mg(2+)-binding site is contributed by aspartate 409. Threonine 411 provides a ligand contact to Mg(2+). Residue serine 442 is modified to Phosphoserine. ATP contacts are provided by glutamate 498, phenylalanine 540, lysine 563, and arginine 594. A coiled-coil region spans residues 607-643 (DFERINAQLVEAKMALQDREEKLEKVFDEIETNMNLI). ATP contacts are provided by threonine 674, glycine 675, and aspartate 676. A coiled-coil region spans residues 695 to 726 (TELLELTTKTIEESERKEDRLHELLIEYRKKL). Residues arginine 789 and lysine 795 each contribute to the ATP site. Mg(2+) is bound at residue aspartate 816. Residues asparagine 819 and aspartate 820 each coordinate ATP. Residue aspartate 820 coordinates Mg(2+). The helical transmembrane segment at 877-897 (FFYKNLCFILPQFLYQFFCGF) threads the bilayer. Residues 898–905 (SQQPLYDA) are Cytoplasmic-facing. Residues 906-926 (AYLTMYNICFTSLPILAYSLL) traverse the membrane as a helical segment. The Extracellular portion of the chain corresponds to 927–952 (EQHINIDTLTADPRLYMKITGNAMLQ). Residues 953 to 973 (LGPFLHWTFLAAFEGTVFFFG) traverse the membrane as a helical segment. The Cytoplasmic segment spans residues 974–988 (TYFLFQTSSLEDNGK). The helical transmembrane segment at 989–1009 (IYGNWTFGTIVFTVLVFTVTL) threads the bilayer. Topologically, residues 1010 to 1023 (KLALDTRFWTWINH) are extracellular. A helical membrane pass occupies residues 1024 to 1044 (FVIWGSLAFYVFFSFFWGGII). The Cytoplasmic portion of the chain corresponds to 1045-1066 (WPFLKQQRMYFVFAQMLCSVST). The chain crosses the membrane as a helical span at residues 1067–1087 (WLAIILLIFISLFPEILLIVV). Residues 1088-1129 (KNVRRRSARRNLSCRRASDSLSARPSVRPLLLRTFSDESNIL) lie on the Extracellular side of the membrane. Phosphoserine occurs at positions 1105, 1113, and 1123. The short motif at 1113 to 1118 (SVRPLL) is the Di-leucine motif element.

It belongs to the cation transport ATPase (P-type) (TC 3.A.3) family. Type IV subfamily. As to quaternary structure, component of a P4-ATPase flippase complex which consists of a catalytic alpha subunit ATP11C and an accessory beta subunit TMEM30A. Mg(2+) serves as cofactor. Proteolytically cleaved by CASP3, CASP6 and CASP7. In terms of processing, phosphorylated at Ser-1113 likely by PRKCA; this creates a functional di-leucine motif that is sufficient for endocytosis. As to expression, widely expressed. Expressed in retina, brain, liver and testes (at protein level). Expressed in lung, bone marrow, lymph nodes, prostate, ovary and uterus. Expressed in fetus.

The protein localises to the cell membrane. It is found in the endoplasmic reticulum membrane. The protein resides in the early endosome membrane. Its subcellular location is the recycling endosome membrane. It catalyses the reaction ATP + H2O + phospholipidSide 1 = ADP + phosphate + phospholipidSide 2.. The catalysed reaction is a 1,2-diacyl-sn-glycero-3-phospho-L-serine(out) + ATP + H2O = a 1,2-diacyl-sn-glycero-3-phospho-L-serine(in) + ADP + phosphate + H(+). It carries out the reaction a 1,2-diacyl-sn-glycero-3-phosphoethanolamine(out) + ATP + H2O = a 1,2-diacyl-sn-glycero-3-phosphoethanolamine(in) + ADP + phosphate + H(+). Functionally, catalytic component of a P4-ATPase flippase complex which catalyzes the hydrolysis of ATP coupled to the transport of aminophospholipids, phosphatidylserines (PS) and phosphatidylethanolamines (PE), from the outer to the inner leaflet of the plasma membrane. Major PS-flippase in immune cell subsets. In erythrocyte plasma membrane, it is required to maintain PS in the inner leaflet preventing its exposure on the surface. This asymmetric distribution is critical for the survival of erythrocytes in circulation since externalized PS is a phagocytic signal for erythrocyte clearance by splenic macrophages. Required for B cell differentiation past the pro-B cell stage. Seems to mediate PS flipping in pro-B cells. May be involved in the transport of cholestatic bile acids. This is Phospholipid-transporting ATPase 11C from Mus musculus (Mouse).